The chain runs to 540 residues: Cytochrome P450 monooxygenase CYP3 (540 aa).

Asparagine 2 carries N-linked (GlcNAc...) asparagine glycosylation. Residues 26–46 traverse the membrane as a helical segment; it reads IFGLSSSTLVVLVAMIAVSTL. N-linked (GlcNAc...) asparagine glycans are attached at residues asparagine 100, asparagine 210, and asparagine 400. Cysteine 471 contacts heme.

The protein belongs to the cytochrome P450 family. Requires heme as cofactor.

The protein resides in the membrane. It functions in the pathway secondary metabolite biosynthesis. Functionally, cytochrome P450 monooxygenase; part of the gene cluster that mediates the biosynthesis of itaconic acid and 2-hydroxyparaconate. Cis-aconitate is secreted by the mitochondrial tricarboxylate transporter MTT1. In the cytosol cis-aconitate is converted into trans-aconitate via isomerization by the aconitate-delta-isomerase ADI1. Decarboxylation of trans-aconitate by the trans-aconitate decarboxylase TAD1 then leads then to the production of itaconic acid. The cytochrome P450 monooxygenase CYP3 further converts itaconate to 2-hydroxyparaconate via oxidation of the double bond, leading to a transient epoxide, which can subsequently be lactonized to produce 2-hydroxyparaconate. Secretion of itaconate and possibly 2-hydroxyparaconate into the medium is mediated by the major facilitator ITP1. The glyoxalase domain-containing protein RDO1 is not involved in the biosynthesis of itaconate and 2-hydroxyparaconate, however, it might play a role in the further conversion of 2-hydroxyparaconate to itatartarate. The polypeptide is Cytochrome P450 monooxygenase CYP3 (Mycosarcoma maydis (Corn smut fungus)).